The following is a 443-amino-acid chain: 5-methylthioadenosine/S-adenosylhomocysteine deaminase 1 (443 aa).

Positions 69 and 71 each coordinate Zn(2+). Positions 98 and 191 each coordinate substrate. His218 is a binding site for Zn(2+). Substrate-binding residues include Glu221 and Asp306. Asp306 contacts Zn(2+).

The protein belongs to the metallo-dependent hydrolases superfamily. MTA/SAH deaminase family. The cofactor is Zn(2+).

It carries out the reaction S-adenosyl-L-homocysteine + H2O + H(+) = S-inosyl-L-homocysteine + NH4(+). The catalysed reaction is S-methyl-5'-thioadenosine + H2O + H(+) = S-methyl-5'-thioinosine + NH4(+). Its function is as follows. Catalyzes the deamination of 5-methylthioadenosine and S-adenosyl-L-homocysteine into 5-methylthioinosine and S-inosyl-L-homocysteine, respectively. Is also able to deaminate adenosine. This Syntrophus aciditrophicus (strain SB) protein is 5-methylthioadenosine/S-adenosylhomocysteine deaminase 1.